We begin with the raw amino-acid sequence, 88 residues long: uncharacterized protein (88 aa).

2 helical membrane passes run 8–28 (IFLS…SIFF) and 45–65 (ELLR…VINL).

It is found in the membrane. This is an uncharacterized protein from Saccharomyces cerevisiae (strain ATCC 204508 / S288c) (Baker's yeast).